Consider the following 337-residue polypeptide: MIEPLDSPASDSDFLDYPSALGNCTDEQISFKMQYLPVIYSIIFLVGFPGNTVAISIYIFKMRPWRGSTVIMLNLALTDLLYLTSLPFLIHYYASGENWIFGDFMCKFIRFGFHFNLYSSILFLTCFSLFRYVVIIHPMSCFSIQKTRWAVVACAGVWVISLVAVMPMTFLITSTTRTNRSACLDLTSSDDLTTIKWYNLILTATTFCLPLVIVTLCYTTIISTLTHGPRTHSCFKQKARRLTILLLLVFYICFLPFHILRVIRIESRLLSISCSIESHIHEAYIVSRPLAALNTFGNLLLYVVVSNNFQQAFCSIVRCKASGDLEQGKKDSCSNNP.

Topologically, residues 1-38 (MIEPLDSPASDSDFLDYPSALGNCTDEQISFKMQYLPV) are extracellular. N-linked (GlcNAc...) asparagine glycosylation occurs at Asn-23. The helical transmembrane segment at 39 to 59 (IYSIIFLVGFPGNTVAISIYI) threads the bilayer. Residues 60 to 69 (FKMRPWRGST) lie on the Cytoplasmic side of the membrane. Residues 70–90 (VIMLNLALTDLLYLTSLPFLI) traverse the membrane as a helical segment. The Extracellular segment spans residues 91 to 116 (HYYASGENWIFGDFMCKFIRFGFHFN). A disulfide bridge links Cys-106 with Cys-183. A helical membrane pass occupies residues 117-137 (LYSSILFLTCFSLFRYVVIIH). Residues 138 to 151 (PMSCFSIQKTRWAV) lie on the Cytoplasmic side of the membrane. The chain crosses the membrane as a helical span at residues 152 to 172 (VACAGVWVISLVAVMPMTFLI). Residues 173-200 (TSTTRTNRSACLDLTSSDDLTTIKWYNL) lie on the Extracellular side of the membrane. Residues 201–221 (ILTATTFCLPLVIVTLCYTTI) form a helical membrane-spanning segment. The Cytoplasmic segment spans residues 222 to 242 (ISTLTHGPRTHSCFKQKARRL). Residues 243-263 (TILLLLVFYICFLPFHILRVI) form a helical membrane-spanning segment. At 264–284 (RIESRLLSISCSIESHIHEAY) the chain is on the extracellular side. The helical transmembrane segment at 285–305 (IVSRPLAALNTFGNLLLYVVV) threads the bilayer. The Cytoplasmic segment spans residues 306-337 (SNNFQQAFCSIVRCKASGDLEQGKKDSCSNNP).

Belongs to the G-protein coupled receptor 1 family. In terms of tissue distribution, predominantly expressed in the kidney with limited expression in the testis and the smooth muscle. Expressed in SLC26A4/pendrin-positive type B and non-A non-B intercalated cells (at protein level).

The protein resides in the cell membrane. G protein-coupled receptor for dicarboxylates and amino dicarboxylates. Receptor for itaconate produced by activated macrophages upon bacterial infection. In the respiratory epithelium, couples the binding of itaconate to the activation of GNA11 and downstream intracellular Ca(2+) release, leading to mucocilliary clearance of airborne pathogens. Receptor for leukotriene E4 (LTE4) produced by mast cells upon allergic inflammation. Binds with high affinity to LTE4 and elicits mucin release from pulmonary epithelium in response to airborne fungi allergens. Regulates mucin-producing goblet cell homeostasis. Receptor for alpha-ketoglutarate produced by proximal tubule renal cells upon metabolic alkalosis. In an intrarenal paracrine signaling pathway, binds alpha-ketoglutarate and drives transepithelial salt reabsorption and bicarbonate secretion by SLC26A4/pendrin-positive intercalated cells. This is 2-oxoglutarate receptor 1 (Oxgr1) from Mus musculus (Mouse).